The chain runs to 163 residues: MAASGEQAPCSVYFCGSIRGGREDQALYARIVSRLRRYGKVLTEHVADAELEPLGEEAAGGDQFIHEQDLNWLQQADVVVAEVTQPSLGVGYELGRAVALGKPILCLFRPQSGRVLSAMIRGAADGSRFQVWDYAEGEVETMLDRYFEAYLPQKTASSSHPSA.

A2 carries the N-acetylalanine modification. G16 is a 5-hydroxymethyl-dUMP binding site. S17 is subject to Phosphoserine. I18, R19, G20, S87, G89, and E93 together coordinate 5-hydroxymethyl-dUMP. S87 bears the Phosphoserine mark. S112, S117, S127, and S158 each carry phosphoserine. S117 is a binding site for 5-hydroxymethyl-dUMP.

Monomer and homodimer. As to expression, highly expressed in heart, kidney, liver and spleen. Weakly expressed in lung and skeletal muscle.

The protein resides in the cytoplasm. The protein localises to the nucleus. The catalysed reaction is 5-hydroxymethyl-dUMP + H2O = 5-hydroxymethyluracil + 2-deoxy-D-ribose 5-phosphate. In terms of biological role, part of a nucleotide salvage pathway that eliminates epigenetically modified 5-hydroxymethyl-dCMP (hmdCMP) in a two-step process entailing deamination to cytotoxic 5-hydroxymethyl-dUMP (hmdUMP), followed by its hydrolysis into 5-hydroxymethyluracil (hmU) and 2-deoxy-D-ribose 5-phosphate (deoxyribosephosphate). Catalyzes the second step in that pathway, the hydrolysis of the N-glycosidic bond in hmdUMP, degrading this cytotoxic nucleotide to avoid its genomic integration. The sequence is that of 5-hydroxymethyl-dUMP N-hydrolase from Rattus norvegicus (Rat).